The chain runs to 184 residues: MMKAEELNKGFVNEIIEAGTPVPGEKEVASLKSCYQCGTCTGSCPSGRRTAYRTRKVIRQALLGIDSVLDSDDIWKCTTCYTCYERCPRDVKVTEIIKTIRNLAAQKGNMAKPHKMTAVYVLKAGHAVPANDDTAKLRKSIGLAEKAPIAQFSQKDMDELRTLAKNLKFDELIGFDWKTMGLKQ.

2 4Fe-4S ferredoxin-type domains span residues 24-54 (GEKEVASLKSCYQCGTCTGSCPSGRRTAYRT) and 65-97 (IDSVLDSDDIWKCTTCYTCYERCPRDVKVTEII). [4Fe-4S] cluster contacts are provided by cysteine 34, cysteine 37, cysteine 40, cysteine 44, cysteine 77, cysteine 80, cysteine 83, and cysteine 87.

The protein belongs to the HdrC family. The heterodisulfide reductase is composed of three subunits; HdrA, HdrB and HdrC. B1 and B2 subunits are interchangeable, as are the C1 and C2 subunits. The heterodisulfide reductase forms a supercomplex with formylmethanofuran dehydrogenase (Fwd), F(420)-non-reducing hydrogenase (Vhu) and formate dehydrogenase (Fdh). It depends on [4Fe-4S] cluster as a cofactor.

The catalysed reaction is coenzyme B + coenzyme M + 2 reduced [2Fe-2S]-[ferredoxin] + 2 H(+) = coenzyme M-coenzyme B heterodisulfide + 2 H2 + 2 oxidized [2Fe-2S]-[ferredoxin]. The enzyme catalyses coenzyme B + coenzyme M + 2 reduced [2Fe-2S]-[ferredoxin] + 2 CO2 = coenzyme M-coenzyme B heterodisulfide + 2 formate + 2 oxidized [2Fe-2S]-[ferredoxin]. Its pathway is cofactor metabolism; coenzyme M-coenzyme B heterodisulfide reduction; coenzyme B and coenzyme M from coenzyme M-coenzyme B heterodisulfide: step 1/1. In terms of biological role, part of a complex that catalyzes the reversible reduction of CoM-S-S-CoB to the thiol-coenzymes H-S-CoM (coenzyme M) and H-S-CoB (coenzyme B). The sequence is that of H(2)/formate:CoB-CoM heterodisulfide,ferredoxin reductase subunit C2 from Methanococcus maripaludis (strain DSM 14266 / JCM 13030 / NBRC 101832 / S2 / LL).